The primary structure comprises 309 residues: Flavonol sulfotransferase-like (309 aa).

Position 59-64 (59-64 (KTGTTW)) interacts with 3'-phosphoadenylyl sulfate. Histidine 119 (proton acceptor) is an active-site residue. Residues arginine 141, serine 149, tyrosine 207, and 274–276 (RKG) each bind 3'-phosphoadenylyl sulfate.

The protein belongs to the sulfotransferase 1 family.

The protein resides in the cytoplasm. In Flaveria bidentis (Coastal plain yellowtops), this protein is Flavonol sulfotransferase-like.